Consider the following 197-residue polypeptide: MKFKNKGLIIILSSPSGTGKSSLAKELLKIDNNLRLSISVTTRKPRLGEVDGINYYFKSDREFKTLVKQNKFLEYAKIYNDYYGTPKEYVKMLLKQGFDVLFDIDWQGVRSIKKNTNNVITIFILPPSIEILEQRLRNRATDNEETIKLRMQSAQNEISHANEYDYVVINDDFSQTLKKIHEIIVAERAKNFAYHEY.

In terms of domain architecture, Guanylate kinase-like spans glycine 7–valine 185. Serine 14–serine 21 serves as a coordination point for ATP.

The protein belongs to the guanylate kinase family.

The protein localises to the cytoplasm. It carries out the reaction GMP + ATP = GDP + ADP. Essential for recycling GMP and indirectly, cGMP. The protein is Guanylate kinase (gmk) of Rickettsia prowazekii (strain Madrid E).